We begin with the raw amino-acid sequence, 837 residues long: MANILKTIIENDKGEIRRLEKMADKVFKYEDQMAALTDDQLKAKTVEFKERYQNGESLDSLLYEAFAVVREGAKRVLGLFPYKVQVMGGIVLHHGDVPEMRTGEGKTLTATMPVYLNALSGKGVHVVTVNEYLSERDATEMGELYSWLGLSVGINLATKSPMEKKEAYECDITYSTNSEIGFDYLRDNMVVRAENMVQRPLNYALVDEVDSILIDEARTPLIVSGANAVETSQLYHMADHYVKSLNKDDYIIDVQSKTIGLSDSGIDRAESYFKLENLYDIENVALTHFIDNALRANYIMLLDIDYVVSEEQEILIVDQFTGRTMEGRRYSDGLHQAIEAKEGVPIQDETKTSASITYQNLFRMYKKLSGMTGTGKTEEEEFREIYNIRVIPIPTNRPVQRIDHSDLLYASIESKFKAVVEDVKARYQKGQPVLVGTVAVETSDYISKKLVAAGVPHEVLNAKNHYREAQIIMNAGQRGAVTIATNMAGRGTDIKLGEGVRELGGLCVIGTERHESRRIDNQLRGRSGRQGDPGESQFYLSLEDDLMKRFGSERLKGIFERLNMSEEAIESRMLTRQVEAAQKRVEGNNYDTRKQVLQYDDVMREQREIIYAQRYDVITADRDLAPEIQSMIKRTIERVVDGHARAKQDEKLEAILNFAKYNLLPEDSITMEDLSGLSDKAIKEELFQRALKVYDSQVSKLRDEEAVKEFQKVLILRVVDNKWTDHIDALDQLRNAVGLRGYAQNNPVVEYQAEGFRMFNDMIGSIEFDVTRLMMKAQIHEQERPQAERHISTTATRNIAAHQASMPEDLDLSQIGRNELCPCGSGKKFKNCHGKRK.

ATP-binding positions include glutamine 85, 103–107 (GEGKT), and aspartate 493. Residues cysteine 821, cysteine 823, cysteine 832, and histidine 833 each contribute to the Zn(2+) site.

It belongs to the SecA family. As to quaternary structure, monomer and homodimer. Part of the essential Sec protein translocation apparatus which comprises SecA, SecYEG and auxiliary proteins SecDF. Other proteins may also be involved. It depends on Zn(2+) as a cofactor.

The protein resides in the cell membrane. It localises to the cytoplasm. The enzyme catalyses ATP + H2O + cellular proteinSide 1 = ADP + phosphate + cellular proteinSide 2.. Part of the Sec protein translocase complex. Interacts with the SecYEG preprotein conducting channel. Has a central role in coupling the hydrolysis of ATP to the transfer of proteins into and across the cell membrane, serving as an ATP-driven molecular motor driving the stepwise translocation of polypeptide chains across the membrane. In Streptococcus pneumoniae (strain Taiwan19F-14), this protein is Protein translocase subunit SecA.